A 39-amino-acid chain; its full sequence is Protein YkiC (39 aa).

A helical transmembrane segment spans residues 13 to 35 (LLSAKLCNCTQAIMTHIIASFLA).

It is found in the cell inner membrane. The chain is Protein YkiC from Escherichia coli (strain K12).